A 296-amino-acid polypeptide reads, in one-letter code: Isoprenyl transferase (296 aa).

The span at 1–11 shows a compositional bias: basic residues; sequence MATERNRRRKG. The segment at 1–29 is disordered; it reads MATERNRRRKGSYPQLPPAPDDYPTFPDK. Aspartate 76 is an active-site residue. Aspartate 76 contributes to the Mg(2+) binding site. Residues 77–80, tryptophan 81, arginine 89, histidine 93, and 121–123 contribute to the substrate site; these read GNGR and STE. The Proton acceptor role is filled by asparagine 124. Substrate is bound by residues tryptophan 125, arginine 127, arginine 244, and 250-252; that span reads RAS. Glutamate 263 contacts Mg(2+).

Belongs to the UPP synthase family. Homodimer. The cofactor is Mg(2+).

Its function is as follows. Catalyzes the condensation of isopentenyl diphosphate (IPP) with allylic pyrophosphates generating different type of terpenoids. The sequence is that of Isoprenyl transferase from Mycolicibacterium parafortuitum (Mycobacterium parafortuitum).